The chain runs to 175 residues: MEEEKRLELRLAPPCHQFTSNNNINGSKQKSSTKETSFLSNNRVEVAPVVGWPPVRSSRRNLTAQLKEEMKKKESDEEKELYVKINMEGVPIGRKVNLSAYNNYQQLSHAVDQLFSKKDSWDLNRQYTLVYEDTEGDKVLVGDVPWEMFVSTVKRLHVLKTSHAFSLSPRKHGKE.

Residues 1 to 39 are disordered; the sequence is MEEEKRLELRLAPPCHQFTSNNNINGSKQKSSTKETSFL. Positions 7–11 match the EAR-like (transcriptional repression) motif; it reads LELRL. The segment covering 17-39 has biased composition (polar residues); it reads QFTSNNNINGSKQKSSTKETSFL. The region spanning 80 to 161 is the PB1 domain; the sequence is ELYVKINMEG…TVKRLHVLKT (82 aa).

Belongs to the Aux/IAA family. As to quaternary structure, homodimers and heterodimers. Interacts with TPL. In terms of tissue distribution, in roots and inflorescence stems.

The protein localises to the nucleus. In terms of biological role, aux/IAA proteins are short-lived transcriptional factors that function as repressors of early auxin response genes at low auxin concentrations. Repression is thought to result from the interaction with auxin response factors (ARFs), proteins that bind to the auxin-responsive promoter element (AuxRE). Formation of heterodimers with ARF proteins may alter their ability to modulate early auxin response genes expression. The protein is Auxin-responsive protein IAA28 (IAA28) of Arabidopsis thaliana (Mouse-ear cress).